The chain runs to 232 residues: ATP phosphoribosyltransferase (232 aa).

The protein belongs to the ATP phosphoribosyltransferase family. Short subfamily. Heteromultimer composed of HisG and HisZ subunits.

Its subcellular location is the cytoplasm. It catalyses the reaction 1-(5-phospho-beta-D-ribosyl)-ATP + diphosphate = 5-phospho-alpha-D-ribose 1-diphosphate + ATP. The protein operates within amino-acid biosynthesis; L-histidine biosynthesis; L-histidine from 5-phospho-alpha-D-ribose 1-diphosphate: step 1/9. Functionally, catalyzes the condensation of ATP and 5-phosphoribose 1-diphosphate to form N'-(5'-phosphoribosyl)-ATP (PR-ATP). Has a crucial role in the pathway because the rate of histidine biosynthesis seems to be controlled primarily by regulation of HisG enzymatic activity. The sequence is that of ATP phosphoribosyltransferase (hisG) from Mesorhizobium japonicum (strain LMG 29417 / CECT 9101 / MAFF 303099) (Mesorhizobium loti (strain MAFF 303099)).